Consider the following 715-residue polypeptide: Tensin-4 (715 aa).

An N-terminal signal peptide occupies residues 1-18 (MSQVMSSPLLAGGHAVSL). Serine 82 carries the phosphoserine modification. 4 disordered regions span residues 159–183 (RCHD…RSGG), 195–251 (RSSS…SPLV), 291–364 (SLLH…CPPS), and 376–435 (LING…ARDM). The segment covering 197 to 206 (SSESLIFSGN) has biased composition (polar residues). Serine 248 carries the post-translational modification Phosphoserine. The segment covering 291–325 (SLLHSSNSSHQSSSRSLESPANSSSSLHSLGSVSL) has biased composition (low complexity). Residues 449 to 556 (WFKPNITREQ…ALPCKLTIPQ (108 aa)) form the SH2 domain. Residues 582–705 (CHTLYLSSVS…QPASQVIGLV (124 aa)) form the PTB domain.

This sequence belongs to the PTEN phosphatase protein family. In terms of assembly, interacts (via SH2 domain) with Rho GTPase-activating protein DLC1 (via C-terminus); the interaction is independent of DLC1 tyrosine phosphorylation. Interacts with integrin ITGB1; the interaction displaces tensin TNS3 from the ITGB1 cytoplasmic tail and promotes ITGB1 stability. Interacts (via SH2 domain) with E3 ubiquitin-protein ligase CBL (phosphorylated on 'Tyr-774'); the interaction is enhanced in the presence of EGF and reduces interaction of CBL with EGFR. Interacts (via SH2 domain) with receptor tyrosine kinase MET (when phosphorylated); the interaction increases MET protein stability. In terms of processing, proteolytically cleaved by caspase-3 during apoptosis. Expressed at low levels in colon (at protein level). Expressed in prostate and placenta.

The protein localises to the cell junction. It localises to the focal adhesion. The protein resides in the cytoplasm. It is found in the cytoskeleton. Functionally, promotes EGF-induced cell migration by displacing tensin TNS3 from the cytoplasmic tail of integrin ITGB1 which results in dissociation of TNS3 from focal adhesions, disassembly of actin stress fibers and initiation of cell migration. Suppresses ligand-induced degradation of EGFR by reducing EGFR ubiquitination in the presence of EGF. Increases MET protein stability by inhibiting MET endocytosis and subsequent lysosomal degradation which leads to increased cell survival, proliferation and migration. This is Tensin-4 (TNS4) from Homo sapiens (Human).